Here is a 169-residue protein sequence, read N- to C-terminus: Disulfide bond formation protein B (169 aa).

Over 1–8 (MRLSVRWV) the chain is Cytoplasmic. The helical transmembrane segment at 9-25 (FFLGFFLCALMLAIAGY) threads the bilayer. Topologically, residues 26–43 (FQFVENLEPCPLCILSRV) are periplasmic. C35 and C38 are joined by a disulfide. The chain crosses the membrane as a helical span at residues 44 to 60 (AVLAIGGVFLVAALHNP). The Cytoplasmic portion of the chain corresponds to 61–67 (KSWGIKV). A helical membrane pass occupies residues 68–84 (YALLGFVVTLIGIGITG). Topologically, residues 85 to 141 (RHVWLQSLPADQVPACGPGLNFMLDNFPLTETLELVFRGSGECAEVQWSFLGLTIPG) are periplasmic. A disulfide bridge links C100 with C127. Residues 142–160 (WTLVAFLFLGVISLWQMGR) traverse the membrane as a helical segment. Residues 161 to 169 (TGGGAGKLT) are Cytoplasmic-facing.

This sequence belongs to the DsbB family.

Its subcellular location is the cell inner membrane. In terms of biological role, required for disulfide bond formation in some periplasmic proteins. Acts by oxidizing the DsbA protein. The sequence is that of Disulfide bond formation protein B from Nitrosococcus oceani (strain ATCC 19707 / BCRC 17464 / JCM 30415 / NCIMB 11848 / C-107).